Reading from the N-terminus, the 358-residue chain is Oxidase FUB9 (358 aa).

Positions S6–A350 constitute an FMN hydroxy acid dehydrogenase domain. Y32 contacts a 2-oxocarboxylate. FMN contacts are provided by S114, Q138, and T166. R175 serves as a coordination point for a 2-oxocarboxylate. Residue K221 coordinates FMN. The active-site Proton acceptor is H245. Residue R248 participates in a 2-oxocarboxylate binding. FMN-binding positions include D276–R280 and G299–R300.

It belongs to the FMN-dependent alpha-hydroxy acid dehydrogenase family. It depends on FMN as a cofactor.

It participates in mycotoxin biosynthesis. In terms of biological role, oxidase; part of the gene cluster that mediates the biosynthesis of fusaric acid, a mycotoxin with low to moderate toxicity to animals and humans, but with high phytotoxic properties. L-aspartate is suggested as fusaric acid amino acid precursor that is activated and further processed to O-acetyl-L-homoserine by cluster enzymes aspartate kinase FUB3 and homoserine O-acetyltransferase FUB5, as well as enzymes of the primary metabolism. The polyketide synthase (PKS) FUB1 generates the triketide trans-2-hexenal which is presumptively released by the hydrolase FUB4 and linked to the NRPS-bound amino acid precursor by NAD(P)-dependent dehydrogenase FUB6. FUB1, FUB4, and the non-canonical NRPS Fub8 may form an enzyme complex. Further processing of the NRPS-bound intermediate might be carried out by FUB6 and the sulfhydrylase FUB7, enabling a spontaneous electrocyclization to close the carbon backbone of fusaric acid. Dihydrofusaric acid is likely to be released via reduction by the thioester reductase (TR) domain of FUB8 whereupon the final oxidation to fusaric acid may (also) be performed by the FMN-dependent dehydrogenase FUB9. The protein is Oxidase FUB9 of Gibberella fujikuroi (strain CBS 195.34 / IMI 58289 / NRRL A-6831) (Bakanae and foot rot disease fungus).